A 219-amino-acid chain; its full sequence is MVDLKTKAFDIAQNFTISLDGPAASGKGTIGLILAKKFALKYFQSSIVYRQLAFNCIHQQIDITDIDAVIALSQELKLDNNIDLENEDIGDIASKIAVISEVRNNLNHNLINLVKTTPRIIMEGRDIGTVVAPDADLKIFITASPYVRAVRRYNQLQAKGKTCILDEIIQQIILRDKRDKERKVGPLLPALGAFIIDTSKLSAIEVVEEVTNYIKNKIT.

21–29 (GPAASGKGT) is a binding site for ATP.

The protein belongs to the cytidylate kinase family. Type 1 subfamily.

It is found in the cytoplasm. It catalyses the reaction CMP + ATP = CDP + ADP. It carries out the reaction dCMP + ATP = dCDP + ADP. The chain is Cytidylate kinase from Rickettsia typhi (strain ATCC VR-144 / Wilmington).